Here is a 181-residue protein sequence, read N- to C-terminus: Type II secretion system protein H (181 aa).

A propeptide spans 1–5 (MRQRG) (leader sequence). Position 6 is an N-methylphenylalanine (Phe-6). Residues 6-29 (FTLLEIMLVVLLAGVAATLVMMAI) traverse the membrane as a helical segment.

It belongs to the GSP H family. As to quaternary structure, type II secretion is composed of four main components: the outer membrane complex, the inner membrane complex, the cytoplasmic secretion ATPase and the periplasm-spanning pseudopilus. Interacts with core component OutG. Cleaved by prepilin peptidase. In terms of processing, methylated by prepilin peptidase at the amino group of the N-terminal phenylalanine once the leader sequence is cleaved by prepilin peptidase.

It localises to the cell inner membrane. Its function is as follows. Component of the type II secretion system required for the energy-dependent secretion of extracellular factors such as proteases and toxins from the periplasm. Part of the pseudopilus tip complex that is critical for the recognition and binding of secretion substrates. This Dickeya chrysanthemi (Pectobacterium chrysanthemi) protein is Type II secretion system protein H (outH).